The primary structure comprises 247 residues: 5'-nucleotidase SurE (247 aa).

Residues Asp8, Asp9, Ser39, and Asn91 each coordinate a divalent metal cation.

The protein belongs to the SurE nucleotidase family. The cofactor is a divalent metal cation.

It localises to the cytoplasm. The enzyme catalyses a ribonucleoside 5'-phosphate + H2O = a ribonucleoside + phosphate. Functionally, nucleotidase that shows phosphatase activity on nucleoside 5'-monophosphates. The protein is 5'-nucleotidase SurE of Laribacter hongkongensis (strain HLHK9).